The sequence spans 191 residues: A-type ATP synthase subunit E (191 aa).

This sequence belongs to the V-ATPase E subunit family. In terms of assembly, has multiple subunits with at least A(3), B(3), C, D, E, F, H, I and proteolipid K(x). Post-translationally, the N-terminus is blocked.

It is found in the cell membrane. Functionally, component of the A-type ATP synthase that produces ATP from ADP in the presence of a proton gradient across the membrane. The sequence is that of A-type ATP synthase subunit E from Sulfurisphaera tokodaii (strain DSM 16993 / JCM 10545 / NBRC 100140 / 7) (Sulfolobus tokodaii).